The primary structure comprises 227 residues: Cytochrome c oxidase subunit 2 (227 aa).

Topologically, residues 1–14 (MAYPFQLGLQDATS) are mitochondrial intermembrane. Residues 15 to 45 (PIMEELLHFHDHTLMIVFLISSLVLYIISLM) form a helical membrane-spanning segment. Topologically, residues 46 to 59 (LTTKLTHTSTMDAQ) are mitochondrial matrix. A helical membrane pass occupies residues 60-87 (EVETVWTILPAIILILIALPSLRILYMM). The Mitochondrial intermembrane segment spans residues 88-227 (DEINNPSLTV…YFETWSAVMV (140 aa)). Residues histidine 161, cysteine 196, glutamate 198, cysteine 200, histidine 204, and methionine 207 each coordinate Cu cation. Glutamate 198 is a Mg(2+) binding site. Tyrosine 218 carries the post-translational modification Phosphotyrosine.

Belongs to the cytochrome c oxidase subunit 2 family. As to quaternary structure, component of the cytochrome c oxidase (complex IV, CIV), a multisubunit enzyme composed of 14 subunits. The complex is composed of a catalytic core of 3 subunits MT-CO1, MT-CO2 and MT-CO3, encoded in the mitochondrial DNA, and 11 supernumerary subunits COX4I, COX5A, COX5B, COX6A, COX6B, COX6C, COX7A, COX7B, COX7C, COX8 and NDUFA4, which are encoded in the nuclear genome. The complex exists as a monomer or a dimer and forms supercomplexes (SCs) in the inner mitochondrial membrane with NADH-ubiquinone oxidoreductase (complex I, CI) and ubiquinol-cytochrome c oxidoreductase (cytochrome b-c1 complex, complex III, CIII), resulting in different assemblies (supercomplex SCI(1)III(2)IV(1) and megacomplex MCI(2)III(2)IV(2)). Found in a complex with TMEM177, COA6, COX18, COX20, SCO1 and SCO2. Interacts with TMEM177 in a COX20-dependent manner. Interacts with COX20. Interacts with COX16. Requires Cu cation as cofactor.

The protein localises to the mitochondrion inner membrane. It carries out the reaction 4 Fe(II)-[cytochrome c] + O2 + 8 H(+)(in) = 4 Fe(III)-[cytochrome c] + 2 H2O + 4 H(+)(out). Functionally, component of the cytochrome c oxidase, the last enzyme in the mitochondrial electron transport chain which drives oxidative phosphorylation. The respiratory chain contains 3 multisubunit complexes succinate dehydrogenase (complex II, CII), ubiquinol-cytochrome c oxidoreductase (cytochrome b-c1 complex, complex III, CIII) and cytochrome c oxidase (complex IV, CIV), that cooperate to transfer electrons derived from NADH and succinate to molecular oxygen, creating an electrochemical gradient over the inner membrane that drives transmembrane transport and the ATP synthase. Cytochrome c oxidase is the component of the respiratory chain that catalyzes the reduction of oxygen to water. Electrons originating from reduced cytochrome c in the intermembrane space (IMS) are transferred via the dinuclear copper A center (CU(A)) of subunit 2 and heme A of subunit 1 to the active site in subunit 1, a binuclear center (BNC) formed by heme A3 and copper B (CU(B)). The BNC reduces molecular oxygen to 2 water molecules using 4 electrons from cytochrome c in the IMS and 4 protons from the mitochondrial matrix. This chain is Cytochrome c oxidase subunit 2 (MT-CO2), found in Lycalopex culpaeus (Culpeo fox).